The sequence spans 517 residues: Maturase K (517 aa).

It belongs to the intron maturase 2 family. MatK subfamily.

The protein localises to the plastid. It is found in the chloroplast. In terms of biological role, usually encoded in the trnK tRNA gene intron. Probably assists in splicing its own and other chloroplast group II introns. This Dracula chimaera protein is Maturase K.